The sequence spans 478 residues: ATP synthase subunit beta (478 aa).

Position 152 to 159 (152 to 159) interacts with ATP; that stretch reads GGAGVGKT.

The protein belongs to the ATPase alpha/beta chains family. F-type ATPases have 2 components, CF(1) - the catalytic core - and CF(0) - the membrane proton channel. CF(1) has five subunits: alpha(3), beta(3), gamma(1), delta(1), epsilon(1). CF(0) has three main subunits: a(1), b(2) and c(9-12). The alpha and beta chains form an alternating ring which encloses part of the gamma chain. CF(1) is attached to CF(0) by a central stalk formed by the gamma and epsilon chains, while a peripheral stalk is formed by the delta and b chains.

It is found in the cell membrane. The catalysed reaction is ATP + H2O + 4 H(+)(in) = ADP + phosphate + 5 H(+)(out). Functionally, produces ATP from ADP in the presence of a proton gradient across the membrane. The catalytic sites are hosted primarily by the beta subunits. The protein is ATP synthase subunit beta of Wolbachia pipientis subsp. Culex pipiens (strain wPip).